Consider the following 322-residue polypeptide: Transaldolase (322 aa).

The active-site Schiff-base intermediate with substrate is K132. S268 and S269 each carry phosphoserine.

Belongs to the transaldolase family. Type 1 subfamily. Homodimer.

It carries out the reaction D-sedoheptulose 7-phosphate + D-glyceraldehyde 3-phosphate = D-erythrose 4-phosphate + beta-D-fructose 6-phosphate. The protein operates within carbohydrate degradation; pentose phosphate pathway; D-glyceraldehyde 3-phosphate and beta-D-fructose 6-phosphate from D-ribose 5-phosphate and D-xylulose 5-phosphate (non-oxidative stage): step 2/3. Transaldolase is important for the balance of metabolites in the pentose-phosphate pathway. This chain is Transaldolase (tal1), found in Schizosaccharomyces pombe (strain 972 / ATCC 24843) (Fission yeast).